A 261-amino-acid chain; its full sequence is Ice-binding protein (261 aa).

The N-terminal stretch at 1-20 is a signal peptide; the sequence is MSLLSIITIGLAGLGGLVNG. The N-linked (GlcNAc...) asparagine glycan is linked to asparagine 185.

The protein belongs to the ice-binding protein family. Homodimer. Dimerization is not required for the thermal hysteresis (TH) activity. Glycosylated. Glycosylation is not required for the thermal hysteresis (TH) activity. Glycosylation may increase stability and secretion of this protein.

Its subcellular location is the secreted. Confers freeze tolerance. Binds to the surface of ice crystals and inhibits their growth. Has low thermal hysteresis (TH) activity, which is the ability to lower the freezing point of an aqueous solution below its melting point. The TH activity of this protein is approximately 0.2 degrees Celsius at 50 uM and 0.3 degrees Celsius at 400 uM. In Leucosporidium sp. (strain AY30) (Arctic yeast), this protein is Ice-binding protein.